We begin with the raw amino-acid sequence, 132 residues long: Ribonuclease VapC15 (132 aa).

A PINc domain is found at 1 to 121 (MIVDTSVWIA…HRDRDYEAIR (121 aa)). D96 contributes to the Mg(2+) binding site. Residues D96, D114, and D116 each coordinate Mn(2+).

The protein belongs to the PINc/VapC protein family. As to quaternary structure, crystallizes as a VapB15-VapC15(2) heterotrimer and as a VapB15(2)-VapC15(2) heterotetramer; each toxin pair forms a homodimer which creates a channel in which the antitoxin binds. It depends on Mg(2+) as a cofactor. Mn(2+) is required as a cofactor.

Its activity is regulated as follows. RNase activity inhibited by EDTA. Functionally, toxic component of a type II toxin-antitoxin (TA) system. Degrades total E.coli RNA, which is partially inhibited by cognate antitoxin VapB15. Upon expression in M.smegmatis inhibits colony formation, which is neutralized by coexpression with VapB15. This is Ribonuclease VapC15 from Mycobacterium tuberculosis (strain ATCC 25618 / H37Rv).